We begin with the raw amino-acid sequence, 212 residues long: Uridine kinase (212 aa).

Position 12 to 19 (12 to 19 (GGSGGGKT)) interacts with ATP.

This sequence belongs to the uridine kinase family.

Its subcellular location is the cytoplasm. It carries out the reaction uridine + ATP = UMP + ADP + H(+). The catalysed reaction is cytidine + ATP = CMP + ADP + H(+). It participates in pyrimidine metabolism; CTP biosynthesis via salvage pathway; CTP from cytidine: step 1/3. Its pathway is pyrimidine metabolism; UMP biosynthesis via salvage pathway; UMP from uridine: step 1/1. In Streptococcus pneumoniae serotype 19F (strain G54), this protein is Uridine kinase.